A 237-amino-acid chain; its full sequence is Uridylate kinase (237 aa).

9-12 (KLSG) is an ATP binding site. The segment at 17–22 (GSQGYG) is involved in allosteric activation by GTP. Glycine 51 contacts UMP. Residues glycine 52 and arginine 56 each coordinate ATP. UMP-binding positions include aspartate 71 and 132 to 139 (CGNPFFTT). The ATP site is built by threonine 159, tyrosine 165, and aspartate 168.

This sequence belongs to the UMP kinase family. In terms of assembly, homohexamer.

The protein resides in the cytoplasm. The catalysed reaction is UMP + ATP = UDP + ADP. Its pathway is pyrimidine metabolism; CTP biosynthesis via de novo pathway; UDP from UMP (UMPK route): step 1/1. Its activity is regulated as follows. Allosterically activated by GTP. Inhibited by UTP. Functionally, catalyzes the reversible phosphorylation of UMP to UDP. This chain is Uridylate kinase, found in Synechococcus sp. (strain CC9902).